Consider the following 326-residue polypeptide: D-threonate 4-phosphate dehydrogenase (326 aa).

Substrate is bound by residues H138 and T139. Positions 168, 212, and 267 each coordinate a divalent metal cation. Substrate is bound by residues K275, N284, and R293.

Belongs to the PdxA family. PdxA2 subfamily. In terms of assembly, homodimer. A divalent metal cation is required as a cofactor.

The enzyme catalyses 4-O-phospho-D-threonate + NAD(+) = dihydroxyacetone phosphate + CO2 + NADH. Its function is as follows. Catalyzes the NAD-dependent oxidation and subsequent decarboxylation of D-threonate 4-phosphate to produce dihydroxyacetone phosphate (DHAP). Can also use 4-hydroxy-L-threonine 4-phosphate as substrate. In Pectobacterium atrosepticum (strain SCRI 1043 / ATCC BAA-672) (Erwinia carotovora subsp. atroseptica), this protein is D-threonate 4-phosphate dehydrogenase.